The following is a 154-amino-acid chain: 6,7-dimethyl-8-ribityllumazine synthase (154 aa).

5-amino-6-(D-ribitylamino)uracil-binding positions include F22, 56-58, and 80-82; these read AFE and TVI. 85-86 is a (2S)-2-hydroxy-3-oxobutyl phosphate binding site; sequence ST. The active-site Proton donor is H88. F113 lines the 5-amino-6-(D-ribitylamino)uracil pocket. R127 serves as a coordination point for (2S)-2-hydroxy-3-oxobutyl phosphate.

It belongs to the DMRL synthase family.

The catalysed reaction is (2S)-2-hydroxy-3-oxobutyl phosphate + 5-amino-6-(D-ribitylamino)uracil = 6,7-dimethyl-8-(1-D-ribityl)lumazine + phosphate + 2 H2O + H(+). The protein operates within cofactor biosynthesis; riboflavin biosynthesis; riboflavin from 2-hydroxy-3-oxobutyl phosphate and 5-amino-6-(D-ribitylamino)uracil: step 1/2. Its function is as follows. Catalyzes the formation of 6,7-dimethyl-8-ribityllumazine by condensation of 5-amino-6-(D-ribitylamino)uracil with 3,4-dihydroxy-2-butanone 4-phosphate. This is the penultimate step in the biosynthesis of riboflavin. This chain is 6,7-dimethyl-8-ribityllumazine synthase, found in Lactococcus lactis subsp. cremoris (strain MG1363).